The following is a 4621-amino-acid chain: Dynein axonemal heavy chain 5 (4621 aa).

A stem region spans residues Met-1 to Ile-1938. Coiled coils occupy residues Trp-260–Lys-305 and Leu-803–Glu-825. The segment at Val-901–Glu-921 is disordered. Coiled coils occupy residues Ala-1065–Leu-1094 and Asp-1433–Ala-1462. 4 AAA regions span residues Tyr-1939–Thr-2161, Thr-2221–Leu-2440, Val-2547–Gly-2800, and Leu-2913–Ser-3167. ATP-binding positions include Gly-1977–Thr-1984 and Gly-2259–Thr-2266. Positions Tyr-3182–Cys-3479 are stalk. 3 coiled-coil regions span residues Tyr-3186–Lys-3299, Leu-3423–Ile-3490, and Ile-3729–Arg-3814. AAA stretches follow at residues Leu-3564 to Gln-3794 and Ala-4009 to Asn-4223. Residues Phe-4389 to Gly-4417 adopt a coiled-coil conformation.

Belongs to the dynein heavy chain family. In terms of assembly, interacts with DNAL1. Consists of at least two heavy chains and a number of intermediate and light chains. Strongly expressed in lung and kidney and weaker expression seen in brain, heart and testis. In the brain, expressed in ependymal cells lining the brain ventricles and the aqueduct.

The protein resides in the cytoplasm. Its subcellular location is the cytoskeleton. The protein localises to the cilium axoneme. Force generating protein of respiratory cilia. Produces force towards the minus ends of microtubules. Dynein has ATPase activity; the force-producing power stroke is thought to occur on release of ADP. Required for structural and functional integrity of the cilia of ependymal cells lining the brain ventricles. The protein is Dynein axonemal heavy chain 5 of Mus musculus (Mouse).